Reading from the N-terminus, the 276-residue chain is Diaminopimelate epimerase (276 aa).

Residues N13, Q46, and N66 each contribute to the substrate site. Residue C75 is the Proton donor of the active site. Substrate contacts are provided by residues G76–N77, N159, N192, and E210–R211. The Proton acceptor role is filled by C219. Residue G220–S221 participates in substrate binding.

This sequence belongs to the diaminopimelate epimerase family. As to quaternary structure, homodimer.

Its subcellular location is the cytoplasm. It carries out the reaction (2S,6S)-2,6-diaminopimelate = meso-2,6-diaminopimelate. The protein operates within amino-acid biosynthesis; L-lysine biosynthesis via DAP pathway; DL-2,6-diaminopimelate from LL-2,6-diaminopimelate: step 1/1. Functionally, catalyzes the stereoinversion of LL-2,6-diaminopimelate (L,L-DAP) to meso-diaminopimelate (meso-DAP), a precursor of L-lysine and an essential component of the bacterial peptidoglycan. This is Diaminopimelate epimerase from Coxiella burnetii (strain CbuK_Q154) (Coxiella burnetii (strain Q154)).